Consider the following 159-residue polypeptide: NAD(P)H-quinone oxidoreductase subunit J, chloroplastic (159 aa).

The protein belongs to the complex I 30 kDa subunit family. As to quaternary structure, NDH is composed of at least 16 different subunits, 5 of which are encoded in the nucleus. Leaves.

Its subcellular location is the plastid. The protein resides in the chloroplast thylakoid membrane. The enzyme catalyses a plastoquinone + NADH + (n+1) H(+)(in) = a plastoquinol + NAD(+) + n H(+)(out). It catalyses the reaction a plastoquinone + NADPH + (n+1) H(+)(in) = a plastoquinol + NADP(+) + n H(+)(out). NDH shuttles electrons from NAD(P)H:plastoquinone, via FMN and iron-sulfur (Fe-S) centers, to quinones in the photosynthetic chain and possibly in a chloroplast respiratory chain. The immediate electron acceptor for the enzyme in this species is believed to be plastoquinone. Couples the redox reaction to proton translocation, and thus conserves the redox energy in a proton gradient. The polypeptide is NAD(P)H-quinone oxidoreductase subunit J, chloroplastic (Zea mays (Maize)).